We begin with the raw amino-acid sequence, 63 residues long: Putative ankyrin repeat protein RF_p14 (63 aa).

ANK repeat units lie at residues 11 to 43 (KLNQKLMRAAATGDIEAVQKLVLRGADIYCRDH) and 44 to 63 (QGDTALSLAAGSGYLDILDI).

The polypeptide is Putative ankyrin repeat protein RF_p14 (Rickettsia felis (strain ATCC VR-1525 / URRWXCal2) (Rickettsia azadi)).